The primary structure comprises 206 residues: Small ribosomal subunit protein uS4 (206 aa).

One can recognise an S4 RNA-binding domain in the interval 96 to 156; the sequence is GRLDNVVYRM…EKAKKQARIK (61 aa).

It belongs to the universal ribosomal protein uS4 family. Part of the 30S ribosomal subunit. Contacts protein S5. The interaction surface between S4 and S5 is involved in control of translational fidelity.

In terms of biological role, one of the primary rRNA binding proteins, it binds directly to 16S rRNA where it nucleates assembly of the body of the 30S subunit. Functionally, with S5 and S12 plays an important role in translational accuracy. This is Small ribosomal subunit protein uS4 from Aeromonas salmonicida (strain A449).